A 273-amino-acid polypeptide reads, in one-letter code: Dermonecrotic toxin LapSicTox-alphaIB1bi (273 aa).

Histidine 5 is a catalytic residue. Mg(2+)-binding residues include glutamate 25 and aspartate 27. The active-site Nucleophile is the histidine 41. 2 cysteine pairs are disulfide-bonded: cysteine 45–cysteine 51 and cysteine 47–cysteine 190. Aspartate 85 serves as a coordination point for Mg(2+). N-linked (GlcNAc...) asparagine glycans are attached at residues asparagine 189 and asparagine 250.

The protein belongs to the arthropod phospholipase D family. Class II subfamily. Mg(2+) is required as a cofactor. Expressed by the venom gland.

The protein resides in the secreted. The enzyme catalyses an N-(acyl)-sphingosylphosphocholine = an N-(acyl)-sphingosyl-1,3-cyclic phosphate + choline. The catalysed reaction is an N-(acyl)-sphingosylphosphoethanolamine = an N-(acyl)-sphingosyl-1,3-cyclic phosphate + ethanolamine. It catalyses the reaction a 1-acyl-sn-glycero-3-phosphocholine = a 1-acyl-sn-glycero-2,3-cyclic phosphate + choline. It carries out the reaction a 1-acyl-sn-glycero-3-phosphoethanolamine = a 1-acyl-sn-glycero-2,3-cyclic phosphate + ethanolamine. Functionally, dermonecrotic toxins cleave the phosphodiester linkage between the phosphate and headgroup of certain phospholipids (sphingolipid and lysolipid substrates), forming an alcohol (often choline) and a cyclic phosphate. This toxin acts on sphingomyelin (SM). It may also act on ceramide phosphoethanolamine (CPE), lysophosphatidylcholine (LPC) and lysophosphatidylethanolamine (LPE), but not on lysophosphatidylserine (LPS), and lysophosphatidylglycerol (LPG). It acts by transphosphatidylation, releasing exclusively cyclic phosphate products as second products. Induces dermonecrosis, hemolysis, increased vascular permeability, edema, inflammatory response, and platelet aggregation. In Loxosceles apachea (Apache recluse spider), this protein is Dermonecrotic toxin LapSicTox-alphaIB1bi.